The chain runs to 313 residues: Ribosomal RNA small subunit methyltransferase H (313 aa).

Residues 35 to 37 (GGH), D55, F79, D100, and Q107 contribute to the S-adenosyl-L-methionine site.

The protein belongs to the methyltransferase superfamily. RsmH family.

The protein resides in the cytoplasm. The catalysed reaction is cytidine(1402) in 16S rRNA + S-adenosyl-L-methionine = N(4)-methylcytidine(1402) in 16S rRNA + S-adenosyl-L-homocysteine + H(+). Functionally, specifically methylates the N4 position of cytidine in position 1402 (C1402) of 16S rRNA. This Burkholderia ambifaria (strain ATCC BAA-244 / DSM 16087 / CCUG 44356 / LMG 19182 / AMMD) (Burkholderia cepacia (strain AMMD)) protein is Ribosomal RNA small subunit methyltransferase H.